Here is a 69-residue protein sequence, read N- to C-terminus: Cytochrome c oxidase subunit 8A, mitochondrial (69 aa).

Residues 1–25 (MSVLTPLLLRGLTGSARRLPVPRAK) constitute a mitochondrion transit peptide. Positions 2–19 (SVLTPLLLRGLTGSARRL) match the SIFI-degron motif. At 26–36 (IHSLPPEGKLG) the chain is on the mitochondrial matrix side. A helical membrane pass occupies residues 37–60 (IMELAVGLTSCFVTFLLPAGWILS). Over 61-69 (HLETYRRPE) the chain is Mitochondrial intermembrane.

It belongs to the cytochrome c oxidase VIII family. In terms of assembly, component of the cytochrome c oxidase (complex IV, CIV), a multisubunit enzyme composed of 14 subunits. The complex is composed of a catalytic core of 3 subunits MT-CO1, MT-CO2 and MT-CO3, encoded in the mitochondrial DNA, and 11 supernumerary subunits COX4I1 (or COX4I2), COX5A, COX5B, COX6A1 (or COX6A2), COX6B1 (or COX6B2), COX6C, COX7A2 (or COX7A1), COX7B, COX7C, COX8A and NDUFA4, which are encoded in the nuclear genome. The complex exists as a monomer or a dimer and forms supercomplexes (SCs) in the inner mitochondrial membrane with NADH-ubiquinone oxidoreductase (complex I, CI) and ubiquinol-cytochrome c oxidoreductase (cytochrome b-c1 complex, complex III, CIII), resulting in different assemblies (supercomplex SCI(1)III(2)IV(1) and megacomplex MCI(2)III(2)IV(2)). Post-translationally, in response to mitochondrial stress, the precursor protein is ubiquitinated by the SIFI complex in the cytoplasm before mitochondrial import, leading to its degradation. Within the SIFI complex, UBR4 initiates ubiquitin chain that are further elongated or branched by KCMF1. In terms of tissue distribution, widely expressed.

The protein localises to the mitochondrion inner membrane. It participates in energy metabolism; oxidative phosphorylation. Its function is as follows. Component of the cytochrome c oxidase, the last enzyme in the mitochondrial electron transport chain which drives oxidative phosphorylation. The respiratory chain contains 3 multisubunit complexes succinate dehydrogenase (complex II, CII), ubiquinol-cytochrome c oxidoreductase (cytochrome b-c1 complex, complex III, CIII) and cytochrome c oxidase (complex IV, CIV), that cooperate to transfer electrons derived from NADH and succinate to molecular oxygen, creating an electrochemical gradient over the inner membrane that drives transmembrane transport and the ATP synthase. Cytochrome c oxidase is the component of the respiratory chain that catalyzes the reduction of oxygen to water. Electrons originating from reduced cytochrome c in the intermembrane space (IMS) are transferred via the dinuclear copper A center (CU(A)) of subunit 2 and heme A of subunit 1 to the active site in subunit 1, a binuclear center (BNC) formed by heme A3 and copper B (CU(B)). The BNC reduces molecular oxygen to 2 water molecules using 4 electrons from cytochrome c in the IMS and 4 protons from the mitochondrial matrix. This Homo sapiens (Human) protein is Cytochrome c oxidase subunit 8A, mitochondrial (COX8A).